Here is a 301-residue protein sequence, read N- to C-terminus: GTPase Era (301 aa).

In terms of domain architecture, Era-type G spans 7–175; the sequence is YCGFIAIVGR…AAIVRKHLPE (169 aa). The segment at 15–22 is G1; it reads GRPNVGKS. GTP is bound at residue 15–22; sequence GRPNVGKS. The tract at residues 41-45 is G2; the sequence is QTTRH. Residues 62 to 65 form a G3 region; the sequence is DTPG. GTP-binding positions include 62–66 and 124–127; these read DTPGL and NKVD. Residues 124-127 form a G4 region; sequence NKVD. A G5 region spans residues 154-156; it reads ISA. Positions 206–283 constitute a KH type-2 domain; that stretch reads LGAELPYSVT…HLELWVKVKS (78 aa).

It belongs to the TRAFAC class TrmE-Era-EngA-EngB-Septin-like GTPase superfamily. Era GTPase family. Monomer.

It localises to the cytoplasm. The protein resides in the cell inner membrane. Its function is as follows. An essential GTPase that binds both GDP and GTP, with rapid nucleotide exchange. Plays a role in 16S rRNA processing and 30S ribosomal subunit biogenesis and possibly also in cell cycle regulation and energy metabolism. The chain is GTPase Era from Escherichia coli (strain K12 / DH10B).